The sequence spans 624 residues: Dihydroxy-acid dehydratase (624 aa).

Asp81 contacts Mg(2+). Residue Cys122 coordinates [2Fe-2S] cluster. Asp123 and Lys124 together coordinate Mg(2+). Lys124 bears the N6-carboxylysine mark. Residue Cys195 participates in [2Fe-2S] cluster binding. Glu499 is a Mg(2+) binding site. Ser525 (proton acceptor) is an active-site residue.

The protein belongs to the IlvD/Edd family. In terms of assembly, homodimer. It depends on [2Fe-2S] cluster as a cofactor. The cofactor is Mg(2+).

The catalysed reaction is (2R)-2,3-dihydroxy-3-methylbutanoate = 3-methyl-2-oxobutanoate + H2O. It carries out the reaction (2R,3R)-2,3-dihydroxy-3-methylpentanoate = (S)-3-methyl-2-oxopentanoate + H2O. It functions in the pathway amino-acid biosynthesis; L-isoleucine biosynthesis; L-isoleucine from 2-oxobutanoate: step 3/4. It participates in amino-acid biosynthesis; L-valine biosynthesis; L-valine from pyruvate: step 3/4. Functions in the biosynthesis of branched-chain amino acids. Catalyzes the dehydration of (2R,3R)-2,3-dihydroxy-3-methylpentanoate (2,3-dihydroxy-3-methylvalerate) into 2-oxo-3-methylpentanoate (2-oxo-3-methylvalerate) and of (2R)-2,3-dihydroxy-3-methylbutanoate (2,3-dihydroxyisovalerate) into 2-oxo-3-methylbutanoate (2-oxoisovalerate), the penultimate precursor to L-isoleucine and L-valine, respectively. The chain is Dihydroxy-acid dehydratase from Shewanella baltica (strain OS185).